The sequence spans 253 residues: CTP:phosphoglutamine cytidylyltransferase (253 aa).

It carries out the reaction N(5)-phospho-L-glutamine + CTP + H(+) = N(5)-(cytidine 5'-diphosphoramidyl)-L-glutamine + diphosphate. The protein operates within capsule biogenesis; capsule polysaccharide biosynthesis. In terms of biological role, involved in the biosynthesis of the O-methyl phosphoramidate (MeOPN) group found on the capsular polysaccharide (CPS) of C.jejuni. Catalyzes the formation of CDP-L-glutamine from CTP and L-glutamine phosphate. In the presence of MnCTP, catalyzes the displacement of pyrophosphate from CTP using phosphoramidate, methyl phosphate, methyl phosphonate, phosphate, arsenate, ethanolamine phosphate, (R/S)-glycerol-1-phosphate, glycerol-2-phosphate, serinol phosphate, L-serine phosphate and 3-phospho-D-glycerate as substrate in addition to L-glutamine phosphate. The polypeptide is CTP:phosphoglutamine cytidylyltransferase (Campylobacter jejuni subsp. jejuni serotype O:2 (strain ATCC 700819 / NCTC 11168)).